A 324-amino-acid chain; its full sequence is Zinc transporter ZIP1 (324 aa).

Topologically, residues 1–30 are extracellular; it reads MGPWGEPELLVWRPEAVASEPPVPVGLEVK. The helical transmembrane segment at 31 to 51 threads the bilayer; that stretch reads LGALVLLLVLTLLCSLVPICV. Over 52–68 the chain is Cytoplasmic; that stretch reads LRRPGANHEGSASRQKA. Residues 69 to 89 traverse the membrane as a helical segment; it reads LSLVSCFAGGVFLATCLLDLL. Topologically, residues 90–104 are extracellular; that stretch reads PDYLAAIDEALAALH. The chain crosses the membrane as a helical span at residues 105 to 125; sequence VTLQFPLQEFILAMGFFLVLV. The Cytoplasmic segment spans residues 126–179; that stretch reads MEQITLAYKEQSGPSPLEETRALLGTVNGGPQHWHDGPGVPQASGAPATPSALR. The chain crosses the membrane as a helical span at residues 180–200; sequence ACVLVFSLALHSVFEGLAVGL. The Extracellular portion of the chain corresponds to 201-206; it reads QRDRAR. Residues 207 to 227 form a helical membrane-spanning segment; it reads AMELCLALLLHKGILAVSLSL. The Cytoplasmic portion of the chain corresponds to 228–237; sequence RLLQSHLRAQ. The chain crosses the membrane as a helical span at residues 238–258; that stretch reads VVAGCGILFSCMTPLGIGLGA. Residues 259 to 272 are Extracellular-facing; it reads ALAESAGPLHQLAQ. The chain crosses the membrane as a helical span at residues 273-293; the sequence is SVLEGMAAGTFLYITFLEILP. The Cytoplasmic segment spans residues 294–303; it reads QELASSEQRI. The chain crosses the membrane as a helical span at residues 304 to 324; it reads LKVILLLAGFALLTGLLFIQI.

It belongs to the ZIP transporter (TC 2.A.5) family. In terms of tissue distribution, ubiquitous. Expressed in most adult and fetal tissues including the epidermis.

It localises to the cell membrane. It is found in the endoplasmic reticulum membrane. The catalysed reaction is Zn(2+)(in) = Zn(2+)(out). Inhibited by Ni(2+) ions. Fe(2+) ions do not inhibit zinc uptake. Functionally, transporter for the divalent cation Zn(2+). Mediates the influx of Zn(2+) into cells from extracellular space. Functions as the major importer of zinc from circulating blood plasma into prostate cells. The polypeptide is Zinc transporter ZIP1 (Homo sapiens (Human)).